The sequence spans 481 residues: Tripartite motif-containing protein 10 (481 aa).

The RING-type zinc finger occupies 16 to 61 (CPICQGTLREPVTIDCGHNFCRACLTRYCEIPGPDLEESPTCPLCK). The segment at 94-135 (GEEDVCQEHGEKIYFFCEDDEMQLCVVCREAGEHATHTMRFL) adopts a B box-type zinc-finger fold. 4 residues coordinate Zn(2+): C99, H102, C121, and H127. A coiled-coil region spans residues 142-177 (YREQIHKCLKRLRKEREETQEIQSRENKRMQVLLTQ). Residues 292 to 481 (REMKMFLEKL…GRGSSFFLSS (190 aa)) enclose the B30.2/SPRY domain.

This sequence belongs to the TRIM/RBCC family. As to quaternary structure, interacts with IFNAR1; this interaction prevents association of IFNAR1 with TYK2.

The protein localises to the cytoplasm. E3 ligase that plays an essential role in the differentiation and survival of terminal erythroid cells. May directly bind to PTEN and promote its ubiquitination, resulting in its proteasomal degradation and activation of hypertrophic signaling. In addition, plays a role in immune response regulation by repressing the phosphorylation of STAT1 and STAT2 in the interferon/JAK/STAT signaling pathway independent of its E3 ligase activity. Mechanistically, interacts with the intracellular domain of IFNAR1 and thereby inhibits the association of TYK2 and IFNAR1. The sequence is that of Tripartite motif-containing protein 10 (TRIM10) from Pan troglodytes (Chimpanzee).